Consider the following 256-residue polypeptide: MPKVSVIMTSYNKSDYVAKSISSILSQTFSDFELFIMDDNSNEETLNVIRPFLNDNRVRFYQSDISGVKERTEKTRYAALINQAIEMAEGEYITYATDDNIYMPDRLLKMVRELDTHPEKAVIYSASKTYHLNENRDIVKETVRPAAQVTWNAPCAIDHCSVMHRYSVLEKVKEKFGSYWDESPAFYRIGDARFFWRVNHFYPFYPLDEELDLNYITDQSIHFQLFELEKNEFVRNLPPQRNCRELRESLKKLGMG.

A disulfide bridge connects residues Cys155 and Cys243. Asp191 is an active-site residue.

The protein belongs to the glycosyltransferase 2 family. In terms of assembly, monomer in solution.

The protein operates within spore coat biogenesis; spore coat polysaccharide biosynthesis. In terms of biological role, glycosyltransferase implicated in the synthesis of the spore coat. This is Spore coat polysaccharide biosynthesis protein SpsA (spsA) from Bacillus subtilis (strain 168).